A 165-amino-acid polypeptide reads, in one-letter code: uncharacterized protein (165 aa).

The disordered stretch occupies residues 68 to 107 (LEGAPEWAAPHPEEQRRSPPACSQHTPPLPSTPTGPPPCS). Pro residues predominate over residues 94–107 (PPLPSTPTGPPPCS).

This is an uncharacterized protein from Homo sapiens (Human).